The following is a 204-amino-acid chain: Ribonuclease HII (204 aa).

Residues 17 to 204 (QLVAGVDEVG…KPVQQLLQGD (188 aa)) form the RNase H type-2 domain. Residues aspartate 23, glutamate 24, and aspartate 115 each coordinate a divalent metal cation.

It belongs to the RNase HII family. Requires Mn(2+) as cofactor. It depends on Mg(2+) as a cofactor.

The protein resides in the cytoplasm. It carries out the reaction Endonucleolytic cleavage to 5'-phosphomonoester.. Functionally, endonuclease that specifically degrades the RNA of RNA-DNA hybrids. The polypeptide is Ribonuclease HII (Hahella chejuensis (strain KCTC 2396)).